We begin with the raw amino-acid sequence, 458 residues long: ATP synthase subunit beta (458 aa).

An ATP-binding site is contributed by G148–T155.

Belongs to the ATPase alpha/beta chains family. In terms of assembly, F-type ATPases have 2 components, CF(1) - the catalytic core - and CF(0) - the membrane proton channel. CF(1) has five subunits: alpha(3), beta(3), gamma(1), delta(1), epsilon(1). CF(0) has three main subunits: a(1), b(2) and c(9-12). The alpha and beta chains form an alternating ring which encloses part of the gamma chain. CF(1) is attached to CF(0) by a central stalk formed by the gamma and epsilon chains, while a peripheral stalk is formed by the delta and b chains.

It localises to the cell inner membrane. The enzyme catalyses ATP + H2O + 4 H(+)(in) = ADP + phosphate + 5 H(+)(out). Produces ATP from ADP in the presence of a proton gradient across the membrane. The catalytic sites are hosted primarily by the beta subunits. The sequence is that of ATP synthase subunit beta from Shewanella piezotolerans (strain WP3 / JCM 13877).